A 619-amino-acid polypeptide reads, in one-letter code: Isocitrate dehydrogenase kinase/phosphatase (619 aa).

ATP contacts are provided by residues 354-360 (APGIRGM) and Lys-375. Asp-409 is a catalytic residue.

It belongs to the AceK family.

The protein localises to the cytoplasm. It carries out the reaction L-seryl-[isocitrate dehydrogenase] + ATP = O-phospho-L-seryl-[isocitrate dehydrogenase] + ADP + H(+). In terms of biological role, bifunctional enzyme which can phosphorylate or dephosphorylate isocitrate dehydrogenase (IDH) on a specific serine residue. This is a regulatory mechanism which enables bacteria to bypass the Krebs cycle via the glyoxylate shunt in response to the source of carbon. When bacteria are grown on glucose, IDH is fully active and unphosphorylated, but when grown on acetate or ethanol, the activity of IDH declines drastically concomitant with its phosphorylation. In Bordetella bronchiseptica (strain ATCC BAA-588 / NCTC 13252 / RB50) (Alcaligenes bronchisepticus), this protein is Isocitrate dehydrogenase kinase/phosphatase.